We begin with the raw amino-acid sequence, 360 residues long: MSQTTLKRTPLFDIIAPTGKMVDFAGFEMPVLFSSIKEEHTAVRERVGMFDVSHMGELFVSGSDALAFLQQTLSNDISKIAIGQAQYNVLCQEDGGTVDDLLVYRLDEQDYLLVVNASNIEKDEAHLRQYLTGDVLLENQSDAYGQIAVQGPKAVEVLQELTALKLEDIKFFRFAQGELAGVEMLVSRSGYTGEDGFELYMPSADASAVWNALLEADVVPCGLGARDTLRFEACLPLYGHELSATISPIEAGMGFAVKPQVKSFVGSEVLVKQKEDGPRRQLIGLELTDKGIARQDAPVLVNGETIGFVTTGTLPPTIGKAIALALVPTEYATEETFEIEVRGKKLAAKRIDTPFYRRSK.

It belongs to the GcvT family. The glycine cleavage system is composed of four proteins: P, T, L and H.

The catalysed reaction is N(6)-[(R)-S(8)-aminomethyldihydrolipoyl]-L-lysyl-[protein] + (6S)-5,6,7,8-tetrahydrofolate = N(6)-[(R)-dihydrolipoyl]-L-lysyl-[protein] + (6R)-5,10-methylene-5,6,7,8-tetrahydrofolate + NH4(+). Functionally, the glycine cleavage system catalyzes the degradation of glycine. In Exiguobacterium sibiricum (strain DSM 17290 / CCUG 55495 / CIP 109462 / JCM 13490 / 255-15), this protein is Aminomethyltransferase.